A 611-amino-acid chain; its full sequence is L-tyrosine decarboxylase (611 aa).

Pyridoxal 5'-phosphate-binding positions include G151–S152, T292, and D382–H384. Residue K385 is modified to N6-(pyridoxal phosphate)lysine. Residue Y413 is the Proton donor of the active site. S433 is a pyridoxal 5'-phosphate binding site.

It belongs to the group II decarboxylase family. Tyrosine decarboxylase subfamily. As to quaternary structure, homodimer. The cofactor is pyridoxal 5'-phosphate.

The catalysed reaction is L-tyrosine + H(+) = tyramine + CO2. It carries out the reaction L-dopa + H(+) = dopamine + CO2. The protein operates within amino-acid metabolism. Its activity is regulated as follows. Levodopa decarboxylation is not inhibited by carbidopa, benserazide, and methyldopa, that are three human L-dopa decarboxylase inhibitors. Its function is as follows. Catalyzes the decarboxylation of L-tyrosine to produce tyramine. Plays a role in acid resistance since tyramine production via tyrosine decarboxylation appears to provide a cytosolic pH maintenance mechanism that helps the bacterium cope with acid stress such as that encountered in gastrointestinal tract (GIT) environments. Therefore, may contribute to the colonization of the human GIT by E.faecium. In terms of biological role, also involved in drug metabolism, being able to catalyze decarboxylation of levodopa (L-dopa) to dopamine. In gut microbiota this enzyme is in fact exclusively responsible for the decarboxylation of levodopa, and thus reduces in situ levels of levodopa in the treatment of Parkinson's disease. It was shown that abundance of bacterial tyrosine decarboxylase in the proximal small intestine - the primary site of levodopa absorption - contributes to interindividual variation in drug efficacy and can explain the requirement for an increased dosage regimen of levodopa treatment in Parkinson's disease patients. The chain is L-tyrosine decarboxylase from Enterococcus faecium (Streptococcus faecium).